A 91-amino-acid polypeptide reads, in one-letter code: Bacterial microcompartment shell protein PduJ (91 aa).

In terms of domain architecture, BMC spans A4–P88.

This sequence belongs to the bacterial microcompartments protein family. Homohexamer with a central pore of about 5.7 Angstroms in diameter. Interacts with PduP, which targets PduP to the BMC.

It is found in the bacterial microcompartment. Its pathway is polyol metabolism; 1,2-propanediol degradation. One of the major shell proteins of the bacterial microcompartment (BMC) dedicated to 1,2-propanediol (1,2-PD) degradation. The isolated BMC shell component protein ratio for J:A:B':B:K:T:U is approximately 15:10:7:6:1:1:2. At least one of PduA or PduJ is required for BMC assembly; it must be encoded as the first gene in the pdu operon. Required for structural integrity of BMCs and to mitigate propionaldehyde toxicity, probably joins facets responsible for BMC closure. Edge residues (particularly Lys-25) are important for function and assembly of the BMC. 80% identical to PduA; although their pore regions appear structurally identical, unlike PduA plays no role in 1,2-PD diffusion into or out of the BMC shell. If pduJ is cloned in the chromosomal position of pduA it is able to complement a pduA deletion; it then has a functional pore as it assumes the transport functions of PduA. Overexpression of this protein leads to aberrant filaments that extend the length of the cell, cross the cleavage furrow and impair division. The filaments form nanotubes with a hollow center. Modeling suggests PduJ is probably the hub for binding multiple enzymes to the interior of the BMC; modeling suggests PduC, PduD, PduG and PduM are targeted to PduJ. Its function is as follows. The 1,2-propanediol (1,2-PD) degradation bacterial microcompartment (BMC) concentrates low levels of 1,2-PD catabolic enzymes, concentrates volatile reaction intermediates thus enhancing pathway flux and keeps the level of toxic, mutagenic propionaldehyde low. In Salmonella typhimurium (strain LT2 / SGSC1412 / ATCC 700720), this protein is Bacterial microcompartment shell protein PduJ.